A 110-amino-acid chain; its full sequence is MSDLRKTLASLSSAEDFLKFLNIEYDETVVHINRLHILKRFHDYLKREGNTDALDDRALQALYVKLLSQSYQDFVVSDAVSEKVFKVFHQAMGVSHVSLEKVAVSARKGR.

The protein belongs to the NifW family. Homotrimer; associates with NifD.

May protect the nitrogenase Fe-Mo protein from oxidative damage. The polypeptide is Nitrogenase-stabilizing/protective protein NifW (Acidithiobacillus ferrooxidans (strain ATCC 23270 / DSM 14882 / CIP 104768 / NCIMB 8455) (Ferrobacillus ferrooxidans (strain ATCC 23270))).